The chain runs to 203 residues: Protein-methionine-sulfoxide reductase heme-binding subunit MsrQ (203 aa).

Transmembrane regions (helical) follow at residues Ile-10–Leu-30, Ile-37–Thr-57, Leu-75–Leu-95, Pro-110–Asn-130, Leu-147–Leu-167, and Glu-169–Trp-189.

The protein belongs to the MsrQ family. In terms of assembly, heterodimer of a catalytic subunit (MsrP) and a heme-binding subunit (MsrQ). It depends on FMN as a cofactor. Heme b is required as a cofactor.

Its subcellular location is the cell inner membrane. In terms of biological role, part of the MsrPQ system that repairs oxidized periplasmic proteins containing methionine sulfoxide residues (Met-O), using respiratory chain electrons. Thus protects these proteins from oxidative-stress damage caused by reactive species of oxygen and chlorine generated by the host defense mechanisms. MsrPQ is essential for the maintenance of envelope integrity under bleach stress, rescuing a wide series of structurally unrelated periplasmic proteins from methionine oxidation. MsrQ provides electrons for reduction to the reductase catalytic subunit MsrP, using the quinone pool of the respiratory chain. This Pseudomonas entomophila (strain L48) protein is Protein-methionine-sulfoxide reductase heme-binding subunit MsrQ.